Reading from the N-terminus, the 468-residue chain is Tissue alpha-L-fucosidase (468 aa).

Residues 1-29 (MRAPGERWRPAGAALWLLLLLLLLGATES) form the signal peptide. A Phosphothreonine modification is found at threonine 172. 3 N-linked (GlcNAc...) asparagine glycosylation sites follow: asparagine 243, asparagine 270, and asparagine 384.

It belongs to the glycosyl hydrolase 29 family. Homotetramer.

It is found in the lysosome. It carries out the reaction an alpha-L-fucoside + H2O = L-fucose + an alcohol. It catalyses the reaction a neolactoside IV(2)-alpha-Fuc-nLc4Cer(d18:1(4E)) + H2O = a neolactoside nLc4Cer(d18:1(4E)) + L-fucose. The catalysed reaction is a neolactoside IV(2)-alpha-Fuc-nLc4Cer(d18:0) + H2O = a neolactoside nLc4Cer(d18:0) + L-fucose. Its function is as follows. Alpha-L-fucosidase is responsible for hydrolyzing the alpha-1,6-linked fucose joined to the reducing-end N-acetylglucosamine of the carbohydrate moieties of glycoproteins. In Macaca fascicularis (Crab-eating macaque), this protein is Tissue alpha-L-fucosidase (FUCA1).